The chain runs to 847 residues: Follistatin-related protein 5 (847 aa).

An N-terminal signal peptide occupies residues 1-20 (MFRCWSAILILGFIFLASEG). One can recognise a Kazal-like domain in the interval 81 to 135 (ETRHAECACMDLCKQHYKPVCGSDGEFYENHCEVHRAACLKKQKITIVHNEDCFF). Disulfide bonds link Cys87-Cys119, Cys93-Cys112, and Cys101-Cys133. EF-hand domains follow at residues 175–210 (RKKP…EELN) and 211–246 (KDLS…QVIQ). 9 residues coordinate Ca(2+): Asp188, Asp190, Asn192, Glu199, Asp226, Asn228, Asp230, His232, and Glu237. Ig-like domains lie at 250–338 (PEDQ…FQVN) and 341–426 (PVIR…EDIS). Disulfide bonds link Cys270–Cys321 and Cys362–Cys413. Asn318 and Asn394 each carry an N-linked (GlcNAc...) asparagine glycan.

It is found in the secreted. The sequence is that of Follistatin-related protein 5 (Fstl5) from Mus musculus (Mouse).